We begin with the raw amino-acid sequence, 322 residues long: Acetyl-coenzyme A carboxylase carboxyl transferase subunit beta (322 aa).

In terms of domain architecture, CoA carboxyltransferase N-terminal spans 24–293 (LWIKCPDTGQ…PAVEEPAVVD (270 aa)).

It belongs to the AccD/PCCB family. As to quaternary structure, acetyl-CoA carboxylase is a heterohexamer composed of biotin carboxyl carrier protein (AccB), biotin carboxylase (AccC) and two subunits each of ACCase subunit alpha (AccA) and ACCase subunit beta (AccD).

The protein localises to the cytoplasm. The catalysed reaction is N(6)-carboxybiotinyl-L-lysyl-[protein] + acetyl-CoA = N(6)-biotinyl-L-lysyl-[protein] + malonyl-CoA. It functions in the pathway lipid metabolism; malonyl-CoA biosynthesis; malonyl-CoA from acetyl-CoA: step 1/1. In terms of biological role, component of the acetyl coenzyme A carboxylase (ACC) complex. Biotin carboxylase (BC) catalyzes the carboxylation of biotin on its carrier protein (BCCP) and then the CO(2) group is transferred by the transcarboxylase to acetyl-CoA to form malonyl-CoA. The polypeptide is Acetyl-coenzyme A carboxylase carboxyl transferase subunit beta (Rhodopseudomonas palustris (strain HaA2)).